A 222-amino-acid chain; its full sequence is Ras-related protein RABA4d (222 aa).

22-29 is a GTP binding site; the sequence is GDSAVGKT. The short motif at 44 to 52 is the Effector region element; that stretch reads SKATIGVEF. GTP is bound by residues 70-74, 128-131, and 158-159; these read DTAGQ, NKCD, and SA. 2 S-geranylgeranyl cysteine lipidation sites follow: Cys218 and Cys219.

It belongs to the small GTPase superfamily. Rab family. In terms of assembly, interacts with PI4KB1. In terms of tissue distribution, specifically expressed in pollen and localized to the tips of growing pollen tubes.

Its subcellular location is the cytoplasmic vesicle membrane. Functionally, intracellular vesicle trafficking and protein transport. Plays an important role in the regulation of pollen tube tip growth. The protein is Ras-related protein RABA4d (RABA4D) of Arabidopsis thaliana (Mouse-ear cress).